The following is a 474-amino-acid chain: Aspartyl/glutamyl-tRNA(Asn/Gln) amidotransferase subunit B (474 aa).

The protein belongs to the GatB/GatE family. GatB subfamily. Heterotrimer of A, B and C subunits.

The enzyme catalyses L-glutamyl-tRNA(Gln) + L-glutamine + ATP + H2O = L-glutaminyl-tRNA(Gln) + L-glutamate + ADP + phosphate + H(+). The catalysed reaction is L-aspartyl-tRNA(Asn) + L-glutamine + ATP + H2O = L-asparaginyl-tRNA(Asn) + L-glutamate + ADP + phosphate + 2 H(+). Allows the formation of correctly charged Asn-tRNA(Asn) or Gln-tRNA(Gln) through the transamidation of misacylated Asp-tRNA(Asn) or Glu-tRNA(Gln) in organisms which lack either or both of asparaginyl-tRNA or glutaminyl-tRNA synthetases. The reaction takes place in the presence of glutamine and ATP through an activated phospho-Asp-tRNA(Asn) or phospho-Glu-tRNA(Gln). This Limosilactobacillus fermentum (strain NBRC 3956 / LMG 18251) (Lactobacillus fermentum) protein is Aspartyl/glutamyl-tRNA(Asn/Gln) amidotransferase subunit B.